The chain runs to 218 residues: Riboflavin synthase (218 aa).

2 Lumazine-binding repeats span residues 1 to 97 (MFTG…LGGH) and 98 to 194 (LVSG…EKLI). Residues 4 to 6 (GII), 48 to 50 (CLT), 62 to 67 (DLSLET), 101 to 103 (GHV), Lys-136, 145 to 147 (SLT), and 159 to 164 (TIVPHT) contribute to the 2,4-dihydroxypteridine site.

In terms of assembly, homotrimer.

The enzyme catalyses 2 6,7-dimethyl-8-(1-D-ribityl)lumazine + H(+) = 5-amino-6-(D-ribitylamino)uracil + riboflavin. Its pathway is cofactor biosynthesis; riboflavin biosynthesis; riboflavin from 2-hydroxy-3-oxobutyl phosphate and 5-amino-6-(D-ribitylamino)uracil: step 2/2. Its function is as follows. Catalyzes the dismutation of two molecules of 6,7-dimethyl-8-ribityllumazine, resulting in the formation of riboflavin and 5-amino-6-(D-ribitylamino)uracil. This Photobacterium leiognathi protein is Riboflavin synthase (ribE).